We begin with the raw amino-acid sequence, 146 residues long: Hemoglobin subunit beta (146 aa).

The region spanning 2-146 (FLTAEEKSLV…VANALAHKYH (145 aa)) is the Globin domain. Ser44 is subject to Phosphoserine. Lys59 carries the N6-acetyllysine modification. His63 is a heme b binding site. An N6-acetyllysine modification is found at Lys82. A heme b-binding site is contributed by His92. An S-nitrosocysteine modification is found at Cys93. Lys144 carries the post-translational modification N6-acetyllysine.

It belongs to the globin family. Heterotetramer of two alpha chains and two beta chains. Red blood cells.

Functionally, involved in oxygen transport from the lung to the various peripheral tissues. This is Hemoglobin subunit beta (HBB) from Proteles cristata (Aardwolf).